Consider the following 132-residue polypeptide: Ribosome-binding factor A (132 aa).

This sequence belongs to the RbfA family. Monomer. Binds 30S ribosomal subunits, but not 50S ribosomal subunits or 70S ribosomes.

The protein localises to the cytoplasm. Its function is as follows. One of several proteins that assist in the late maturation steps of the functional core of the 30S ribosomal subunit. Associates with free 30S ribosomal subunits (but not with 30S subunits that are part of 70S ribosomes or polysomes). Required for efficient processing of 16S rRNA. May interact with the 5'-terminal helix region of 16S rRNA. In Pasteurella multocida (strain Pm70), this protein is Ribosome-binding factor A.